The following is a 484-amino-acid chain: Poly(A) RNA polymerase GLD2 (484 aa).

S62 and S69 each carry phosphoserine. Residues F72–H97 are disordered. A Nuclear localization signal motif is present at residues K76 to R92. The span at R77 to R90 shows a compositional bias: basic and acidic residues. S95 is subject to Phosphoserine. Residues D213 and D215 each coordinate Mg(2+). Positions N386–N440 constitute a PAP-associated domain.

The protein belongs to the DNA polymerase type-B-like family. GLD2 subfamily. As to quaternary structure, interacts with CPEB1, CPEB2, CPSF1 and PABPC1. Interacts with QKI isoform QKI7; promoting recruitment to miRNA miR-122 and miR-122 stabilization. Mg(2+) serves as cofactor. The cofactor is Mn(2+). As to expression, expressed in brain. Within brain, it is expressed in cerebellum, hippocampus and medulla.

The protein resides in the cytoplasm. It is found in the nucleus. The enzyme catalyses RNA(n) + ATP = RNA(n)-3'-adenine ribonucleotide + diphosphate. Cytoplasmic poly(A) RNA polymerase that adds successive AMP monomers to the 3'-end of specific RNAs, forming a poly(A) tail. In contrast to the canonical nuclear poly(A) RNA polymerase, it only adds poly(A) to selected cytoplasmic mRNAs. Does not play a role in replication-dependent histone mRNA degradation. Adds a single nucleotide to the 3' end of specific miRNAs, monoadenylation stabilizes and prolongs the activity of some but not all miRNAs. This Homo sapiens (Human) protein is Poly(A) RNA polymerase GLD2.